The primary structure comprises 147 residues: D-aminoacyl-tRNA deacylase (147 aa).

The Gly-cisPro motif, important for rejection of L-amino acids motif lies at glycine 136–proline 137.

It belongs to the DTD family. In terms of assembly, homodimer.

Its subcellular location is the cytoplasm. It carries out the reaction glycyl-tRNA(Ala) + H2O = tRNA(Ala) + glycine + H(+). The enzyme catalyses a D-aminoacyl-tRNA + H2O = a tRNA + a D-alpha-amino acid + H(+). In terms of biological role, an aminoacyl-tRNA editing enzyme that deacylates mischarged D-aminoacyl-tRNAs. Also deacylates mischarged glycyl-tRNA(Ala), protecting cells against glycine mischarging by AlaRS. Acts via tRNA-based rather than protein-based catalysis; rejects L-amino acids rather than detecting D-amino acids in the active site. By recycling D-aminoacyl-tRNA to D-amino acids and free tRNA molecules, this enzyme counteracts the toxicity associated with the formation of D-aminoacyl-tRNA entities in vivo and helps enforce protein L-homochirality. The chain is D-aminoacyl-tRNA deacylase from Streptococcus equi subsp. zooepidemicus (strain H70).